Consider the following 303-residue polypeptide: Aspartate carbamoyltransferase catalytic subunit (303 aa).

Arg51 and Thr52 together coordinate carbamoyl phosphate. Lys80 is an L-aspartate binding site. Residues Arg101, His129, and Gln132 each coordinate carbamoyl phosphate. Residues Arg162 and Arg221 each contribute to the L-aspartate site. Carbamoyl phosphate is bound by residues Leu260 and Pro261.

Belongs to the aspartate/ornithine carbamoyltransferase superfamily. ATCase family. As to quaternary structure, heterooligomer of catalytic and regulatory chains.

It catalyses the reaction carbamoyl phosphate + L-aspartate = N-carbamoyl-L-aspartate + phosphate + H(+). Its pathway is pyrimidine metabolism; UMP biosynthesis via de novo pathway; (S)-dihydroorotate from bicarbonate: step 2/3. Functionally, catalyzes the condensation of carbamoyl phosphate and aspartate to form carbamoyl aspartate and inorganic phosphate, the committed step in the de novo pyrimidine nucleotide biosynthesis pathway. The sequence is that of Aspartate carbamoyltransferase catalytic subunit from Saccharolobus solfataricus (strain ATCC 35092 / DSM 1617 / JCM 11322 / P2) (Sulfolobus solfataricus).